The primary structure comprises 201 residues: Ras-related protein Rab-1B (201 aa).

Met-1 carries the post-translational modification N-acetylmethionine. Ser-17, Gly-18, Val-19, Gly-20, Lys-21, Ser-22, Cys-23, Tyr-33, Thr-34, Glu-35, Ser-36, Ser-39, and Thr-40 together coordinate GTP. Ser-22 is a Mg(2+) binding site. The short motif at 30–45 (DDTYTESYISTIGVDF) is the Switch 1 element. The Mg(2+) site is built by Thr-40 and Asp-63. The interval 64–83 (TAGQERFRTITSSYYRGAHG) is switch 2 region; required for interaction with REP1/CHM. The Switch 2 signature appears at 65-80 (AGQERFRTITSSYYRG). Residues Gly-66, Asn-121, Lys-122, Asp-124, Ser-151, Ala-152, and Lys-153 each contribute to the GTP site. A disordered region spans residues 174–201 (GPGAASGGERPNLKIDSTPVKPAGGGCC). 2 S-geranylgeranyl cysteine lipidation sites follow: Cys-200 and Cys-201. Cys-201 carries the cysteine methyl ester modification.

The protein belongs to the small GTPase superfamily. Rab family. In terms of assembly, interacts with MICAL1 and MICAL2. Interacts (in GTP-bound form) with MICALCL, MICAL1 and MILCAL3. Interacts with GDI1; the interaction requires the GDP-bound state. Interacts with CHM/REP1; the interaction requires the GDP-bound form and is necessary for prenylation by GGTase II. Interacts with RabGAP TBC1D20. Interacts (in GDP-bound form) with lipid phosphatase MTMR6 (via GRAM domain); the interaction regulates MTMR6 recruitment to the endoplasmic reticulum-Golgi intermediate compartment. Interacts (in GDP-bound form) with lipid phosphatase MTMR7. Requires Mg(2+) as cofactor. In terms of processing, prenylated; by GGTase II, only after interaction of the substrate with Rab escort protein 1 (REP1).

The protein localises to the cytoplasm. It localises to the membrane. It is found in the preautophagosomal structure membrane. Its subcellular location is the perinuclear region. The enzyme catalyses GTP + H2O = GDP + phosphate + H(+). With respect to regulation, regulated by guanine nucleotide exchange factors (GEFs) which promote the exchange of bound GDP for free GTP. Regulated by GTPase activating proteins (GAPs) including TBC1D20 which increases the GTP hydrolysis activity. Inhibited by GDP dissociation inhibitors (GDIs). Functionally, the small GTPases Rab are key regulators of intracellular membrane trafficking, from the formation of transport vesicles to their fusion with membranes. Rabs cycle between an inactive GDP-bound form and an active GTP-bound form that is able to recruit to membranes different set of downstream effectors directly responsible for vesicle formation, movement, tethering and fusion. Plays a role in the initial events of the autophagic vacuole development which take place at specialized regions of the endoplasmic reticulum. Regulates vesicular transport between the endoplasmic reticulum and successive Golgi compartments. Required to modulate the compacted morphology of the Golgi. Promotes the recruitment of lipid phosphatase MTMR6 to the endoplasmic reticulum-Golgi intermediate compartment. The polypeptide is Ras-related protein Rab-1B (RAB1B) (Macaca fascicularis (Crab-eating macaque)).